A 461-amino-acid polypeptide reads, in one-letter code: MSFRSILLTALLSLSFTNTMQAAHHHYHRYDDKLRRQYHKKDLPTQENVRKEFCNPYSHSSDPIPLSQQRGVLSPICDLVSECSFLNGISVRSLKQTLKNSAGTQVALDWSILPQWFNPRSSWAPKLSIRDLGYGKPQSLIEADSPCCQTCFNPSAAITIYDSSCGKGVVQVSYTLVRYWRETAALAGQTMMLAGSINDYPARQNIFSQLTFSQTFPNERVNLTVGQYSLYSIDGTLYNNDQQLGFISYALSQNPTATYSSGSLGAYLQVAPTESTCLQVGFQDAYNISGSSIKWNNLTKNKYNFHGYASWAPHCCLGPGQYSVLLYVTRKVPEQMMQTMGWSVNASQYISSKLYVFGRYSGVTGQLSPINRTYSFGLVSPNLLNRNPQDLFGVACAFNNIHASAFQNAQRKYETVIEGFATIGCGPYISFAPDFQLYLYPALRPNKQSARVYSVRANLAI.

The N-terminal stretch at Met-1–Ala-22 is a signal peptide.

Belongs to the OprB family.

It localises to the cell outer membrane. Functionally, facilitates L-arginine uptake, as part of the AaxABC system. The arginine uptake by the bacterium in the macrophage may be a virulence factor against the host innate immune response. The protein is Porin AaxA (aaxA) of Chlamydia muridarum (strain MoPn / Nigg).